We begin with the raw amino-acid sequence, 349 residues long: Interferon regulatory factor 2 (349 aa).

The segment at residues 5–113 (RMRMRPWLEE…NAFRVYRMLP (109 aa)) is a DNA-binding region (IRF tryptophan pentad repeat). Lys75 and Lys78 each carry N6-acetyllysine. Residues 117–148 (RPSKKGKKPKTEKEDKVKHIKQEPVESSLGLS) are disordered. Residues 125-140 (PKTEKEDKVKHIKQEP) are compositionally biased toward basic and acidic residues. A Glycyl lysine isopeptide (Lys-Gly) (interchain with G-Cter in SUMO); alternate cross-link involves residue Lys137. Residue Lys137 forms a Glycyl lysine isopeptide (Lys-Gly) (interchain with G-Cter in SUMO2); alternate linkage. Residue Lys166 forms a Glycyl lysine isopeptide (Lys-Gly) (interchain with G-Cter in SUMO) linkage. Ser225 is modified (phosphoserine). The segment covering 228–239 (SSYAESETTDSV) has biased composition (polar residues). The interval 228–251 (SSYAESETTDSVPSDEESAEGRPH) is disordered. Lys260 is covalently cross-linked (Glycyl lysine isopeptide (Lys-Gly) (interchain with G-Cter in SUMO2)). Lys293 participates in a covalent cross-link: Glycyl lysine isopeptide (Lys-Gly) (interchain with G-Cter in SUMO). The interval 297–349 (NPVPYNSSWPPFQDLPLSSSMTPASSSSRPDRETRASVIKKTSDITQARVKSC) is disordered. The span at 314–324 (SSSMTPASSSS) shows a compositional bias: low complexity.

This sequence belongs to the IRF family. Interacts with BRD7, IRF2BP1 and IRF2BP2. Interacts with CREBBP in growing cells; the interaction acetylates IRF2 and regulates IRF2-dependent H4 promoter activity. In terms of processing, acetylated by CBP/ p300 during cell-growth. Acetylation on Lys-75 is required for stimulation of H4 promoter activity. Post-translationally, the major sites of sumoylation are Lys-137 and Lys-293. Sumoylation with SUMO1 increases its transcriptional repressor activity on IRF1 and diminishes its ability to activate ISRE and H4 promoter. As to expression, expressed throughout the epithelium of the colon. Also expressed in lamina propria.

It localises to the nucleus. Specifically binds to the upstream regulatory region of type I IFN and IFN-inducible MHC class I genes (the interferon consensus sequence (ICS)) and represses those genes. Also acts as an activator for several genes including H4 and IL7. Constitutively binds to the ISRE promoter to activate IL7. Involved in cell cycle regulation through binding the site II (HiNF-M) promoter region of H4 and activating transcription during cell growth. Antagonizes IRF1 transcriptional activation. This is Interferon regulatory factor 2 (IRF2) from Homo sapiens (Human).